The sequence spans 152 residues: uncharacterized protein (152 aa).

3 helical membrane-spanning segments follow: residues 15 to 35, 43 to 63, and 117 to 137; these read IINV…IYDI, LVVA…LILT, and TFLL…KLLI.

This sequence to M.jannaschii MJ0129 and MJ0587.

The protein localises to the cell membrane. This is an uncharacterized protein from Methanocaldococcus jannaschii (strain ATCC 43067 / DSM 2661 / JAL-1 / JCM 10045 / NBRC 100440) (Methanococcus jannaschii).